The following is a 347-amino-acid chain: N-acetyl-gamma-glutamyl-phosphate reductase (347 aa).

The active site involves cysteine 150.

It belongs to the NAGSA dehydrogenase family. Type 1 subfamily.

The protein resides in the cytoplasm. It carries out the reaction N-acetyl-L-glutamate 5-semialdehyde + phosphate + NADP(+) = N-acetyl-L-glutamyl 5-phosphate + NADPH + H(+). Its pathway is amino-acid biosynthesis; L-arginine biosynthesis; N(2)-acetyl-L-ornithine from L-glutamate: step 3/4. Its function is as follows. Catalyzes the NADPH-dependent reduction of N-acetyl-5-glutamyl phosphate to yield N-acetyl-L-glutamate 5-semialdehyde. The chain is N-acetyl-gamma-glutamyl-phosphate reductase from Halothermothrix orenii (strain H 168 / OCM 544 / DSM 9562).